Reading from the N-terminus, the 283-residue chain is Pseudokinase OPG198 (283 aa).

Residues methionine 1 and lysine 30 each contribute to the ATP site. A Protein kinase domain is found at 1-283 (MESFKYCFDN…DRLRRLFIQD (283 aa)).

It belongs to the protein kinase superfamily. Ser/Thr protein kinase family. Poxviruses subfamily. In terms of assembly, interacts with B1/VPK1. Interacts with host VRK1. Interacts with host VRK2.

The protein resides in the host nucleus. Its activity is regulated as follows. Both catalytically active kinases B1/VPK1 and host VRK2 repress B12 inhibitory activity in a B1/VPK1 deletion mutant strain. Its function is as follows. Pseudokinase that plays a role in viral DNA replication repression by activating the antiviral protein BANF1 and inhibiting the activity of host VRK1, a cellular modulator of BANF1. The chain is Pseudokinase OPG198 (OPG198) from Homo sapiens (Human).